Reading from the N-terminus, the 130-residue chain is Small ribosomal subunit protein uS8 (130 aa).

This sequence belongs to the universal ribosomal protein uS8 family. As to quaternary structure, part of the 30S ribosomal subunit. Contacts proteins S5 and S12.

Its function is as follows. One of the primary rRNA binding proteins, it binds directly to 16S rRNA central domain where it helps coordinate assembly of the platform of the 30S subunit. The chain is Small ribosomal subunit protein uS8 from Shewanella denitrificans (strain OS217 / ATCC BAA-1090 / DSM 15013).